The chain runs to 307 residues: Ribosomal RNA small subunit methyltransferase H (307 aa).

S-adenosyl-L-methionine contacts are provided by residues 38–40 (GGH), D58, F82, D99, and Q106.

Belongs to the methyltransferase superfamily. RsmH family.

The protein resides in the cytoplasm. The catalysed reaction is cytidine(1402) in 16S rRNA + S-adenosyl-L-methionine = N(4)-methylcytidine(1402) in 16S rRNA + S-adenosyl-L-homocysteine + H(+). Specifically methylates the N4 position of cytidine in position 1402 (C1402) of 16S rRNA. The sequence is that of Ribosomal RNA small subunit methyltransferase H from Variovorax paradoxus (strain S110).